A 257-amino-acid chain; its full sequence is Imidazole glycerol phosphate synthase subunit HisF (257 aa).

Active-site residues include Asp-12 and Asp-131.

The protein belongs to the HisA/HisF family. As to quaternary structure, heterodimer of HisH and HisF.

Its subcellular location is the cytoplasm. The enzyme catalyses 5-[(5-phospho-1-deoxy-D-ribulos-1-ylimino)methylamino]-1-(5-phospho-beta-D-ribosyl)imidazole-4-carboxamide + L-glutamine = D-erythro-1-(imidazol-4-yl)glycerol 3-phosphate + 5-amino-1-(5-phospho-beta-D-ribosyl)imidazole-4-carboxamide + L-glutamate + H(+). Its pathway is amino-acid biosynthesis; L-histidine biosynthesis; L-histidine from 5-phospho-alpha-D-ribose 1-diphosphate: step 5/9. Functionally, IGPS catalyzes the conversion of PRFAR and glutamine to IGP, AICAR and glutamate. The HisF subunit catalyzes the cyclization activity that produces IGP and AICAR from PRFAR using the ammonia provided by the HisH subunit. This chain is Imidazole glycerol phosphate synthase subunit HisF, found in Burkholderia pseudomallei (strain 1106a).